The primary structure comprises 370 residues: 4-hydroxy-3-methylbut-2-en-1-yl diphosphate synthase (flavodoxin) (370 aa).

4 residues coordinate [4Fe-4S] cluster: Cys-268, Cys-271, Cys-303, and Glu-310.

Belongs to the IspG family. Requires [4Fe-4S] cluster as cofactor.

It carries out the reaction (2E)-4-hydroxy-3-methylbut-2-enyl diphosphate + oxidized [flavodoxin] + H2O + 2 H(+) = 2-C-methyl-D-erythritol 2,4-cyclic diphosphate + reduced [flavodoxin]. It participates in isoprenoid biosynthesis; isopentenyl diphosphate biosynthesis via DXP pathway; isopentenyl diphosphate from 1-deoxy-D-xylulose 5-phosphate: step 5/6. Functionally, converts 2C-methyl-D-erythritol 2,4-cyclodiphosphate (ME-2,4cPP) into 1-hydroxy-2-methyl-2-(E)-butenyl 4-diphosphate. The chain is 4-hydroxy-3-methylbut-2-en-1-yl diphosphate synthase (flavodoxin) from Bacillus cereus (strain B4264).